We begin with the raw amino-acid sequence, 136 residues long: Small ribosomal subunit protein uS9 (136 aa).

The tract at residues 111-136 is disordered; the sequence is TRDPRMKERKKTGQPGARKRFQFSKR. The segment covering 117–136 has biased composition (basic residues); the sequence is KERKKTGQPGARKRFQFSKR.

Belongs to the universal ribosomal protein uS9 family.

In Methylacidiphilum infernorum (isolate V4) (Methylokorus infernorum (strain V4)), this protein is Small ribosomal subunit protein uS9.